The chain runs to 607 residues: UvrABC system protein C (607 aa).

Positions Ser-15 to Ile-92 constitute a GIY-YIG domain. Residues Gly-197 to Thr-232 enclose the UVR domain.

The protein belongs to the UvrC family. Interacts with UvrB in an incision complex.

It is found in the cytoplasm. Functionally, the UvrABC repair system catalyzes the recognition and processing of DNA lesions. UvrC both incises the 5' and 3' sides of the lesion. The N-terminal half is responsible for the 3' incision and the C-terminal half is responsible for the 5' incision. This chain is UvrABC system protein C, found in Oenococcus oeni (strain ATCC BAA-331 / PSU-1).